The primary structure comprises 165 residues: Ribosome maturation factor RimM (165 aa).

The PRC barrel domain occupies 92-163; the sequence is EARHYWADLE…RVVVDPPEGL (72 aa).

The protein belongs to the RimM family. Binds ribosomal protein uS19.

It localises to the cytoplasm. Its function is as follows. An accessory protein needed during the final step in the assembly of 30S ribosomal subunit, possibly for assembly of the head region. Essential for efficient processing of 16S rRNA. May be needed both before and after RbfA during the maturation of 16S rRNA. It has affinity for free ribosomal 30S subunits but not for 70S ribosomes. The protein is Ribosome maturation factor RimM of Anaeromyxobacter sp. (strain Fw109-5).